Consider the following 390-residue polypeptide: Phosphopentomutase (390 aa).

D11, D283, H288, D324, H325, and H336 together coordinate Mn(2+).

Belongs to the phosphopentomutase family. Requires Mn(2+) as cofactor.

The protein resides in the cytoplasm. It catalyses the reaction 2-deoxy-alpha-D-ribose 1-phosphate = 2-deoxy-D-ribose 5-phosphate. The catalysed reaction is alpha-D-ribose 1-phosphate = D-ribose 5-phosphate. The protein operates within carbohydrate degradation; 2-deoxy-D-ribose 1-phosphate degradation; D-glyceraldehyde 3-phosphate and acetaldehyde from 2-deoxy-alpha-D-ribose 1-phosphate: step 1/2. Its function is as follows. Isomerase that catalyzes the conversion of deoxy-ribose 1-phosphate (dRib-1-P) and ribose 1-phosphate (Rib-1-P) to deoxy-ribose 5-phosphate (dRib-5-P) and ribose 5-phosphate (Rib-5-P), respectively. This chain is Phosphopentomutase, found in Clostridium acetobutylicum (strain ATCC 824 / DSM 792 / JCM 1419 / IAM 19013 / LMG 5710 / NBRC 13948 / NRRL B-527 / VKM B-1787 / 2291 / W).